A 181-amino-acid polypeptide reads, in one-letter code: Cyclic AMP-dependent transcription factor ATF-3 (181 aa).

Positions 73–97 (EMSVTKSEAAPEEDERKRRRRERNK) are disordered. Lys78 participates in a covalent cross-link: Glycyl lysine isopeptide (Lys-Gly) (interchain with G-Cter in SUMO2). The bZIP domain maps to 86–149 (DERKRRRRER…QHLIYMLNLH (64 aa)). The segment at 88-110 (RKRRRRERNKIAAAKCRNKKKEK) is basic motif. The segment at 114–142 (LQKESEKLESVNAELKAQIEELKNEKQHL) is leucine-zipper. Residue Thr162 is modified to Phosphothreonine. Lys175 is covalently cross-linked (Glycyl lysine isopeptide (Lys-Gly) (interchain with G-Cter in SUMO2)).

Belongs to the bZIP family. ATF subfamily. In terms of assembly, binds DNA as a homodimer or a heterodimer. Interacts with KAT5; promoting KAT5 autoacetylation and KAT5 deubiquitination by USP7.

The protein localises to the nucleus. Functionally, this protein binds the cAMP response element (CRE) (consensus: 5'-GTGACGT[AC][AG]-3'), a sequence present in many viral and cellular promoters. Represses transcription from promoters with ATF sites. It may repress transcription by stabilizing the binding of inhibitory cofactors at the promoter. This is Cyclic AMP-dependent transcription factor ATF-3 from Mus musculus (Mouse).